A 596-amino-acid chain; its full sequence is Elongation factor 4 (596 aa).

In terms of domain architecture, tr-type G spans 2–183; the sequence is NNIRNFSIIA…TIIRKIPPPK (182 aa). GTP contacts are provided by residues 14–19 and 130–133; these read DHGKST and NKID.

Belongs to the TRAFAC class translation factor GTPase superfamily. Classic translation factor GTPase family. LepA subfamily.

The protein localises to the cell inner membrane. The catalysed reaction is GTP + H2O = GDP + phosphate + H(+). In terms of biological role, required for accurate and efficient protein synthesis under certain stress conditions. May act as a fidelity factor of the translation reaction, by catalyzing a one-codon backward translocation of tRNAs on improperly translocated ribosomes. Back-translocation proceeds from a post-translocation (POST) complex to a pre-translocation (PRE) complex, thus giving elongation factor G a second chance to translocate the tRNAs correctly. Binds to ribosomes in a GTP-dependent manner. The chain is Elongation factor 4 from Campylobacter fetus subsp. fetus (strain 82-40).